A 233-amino-acid polypeptide reads, in one-letter code: RNA-free ribonuclease P (233 aa).

Belongs to the HARP family.

It carries out the reaction Endonucleolytic cleavage of RNA, removing 5'-extranucleotides from tRNA precursor.. Its function is as follows. RNA-free RNase P that catalyzes the removal of the 5'-leader sequence from pre-tRNA to produce the mature 5'-terminus. In Methanocaldococcus jannaschii (strain ATCC 43067 / DSM 2661 / JAL-1 / JCM 10045 / NBRC 100440) (Methanococcus jannaschii), this protein is RNA-free ribonuclease P.